The chain runs to 335 residues: Ferrochelatase (335 aa).

Residues His-207 and Glu-288 each contribute to the Fe cation site.

Belongs to the ferrochelatase family.

It is found in the cytoplasm. It catalyses the reaction heme b + 2 H(+) = protoporphyrin IX + Fe(2+). It participates in porphyrin-containing compound metabolism; protoheme biosynthesis; protoheme from protoporphyrin-IX: step 1/1. Functionally, catalyzes the ferrous insertion into protoporphyrin IX. This is Ferrochelatase from Helicobacter pylori (strain G27).